The following is a 1438-amino-acid chain: Pyochelin synthetase PchE (1438 aa).

Positions 6–85 (DSRTALRDWL…AWLDLLACAD (80 aa)) constitute a Carrier 1 domain. Ser-46 is modified (O-(pantetheine 4'-phosphoryl)serine). The tract at residues 136 to 442 (RTRDVDPQRL…ARRQGQPRSA (307 aa)) is condensation/cyclization. Residues 563 to 950 (RAAEAPDADA…GRVDQQVKVR (388 aa)) are adenylation. The 76-residue stretch at 1350 to 1425 (EPLEAHEQAL…GLARHLQVQT (76 aa)) folds into the Carrier 2 domain. Ser-1385 is modified (O-(pantetheine 4'-phosphoryl)serine).

The protein belongs to the NRP synthetase family. The cofactor is pantetheine 4'-phosphate.

It catalyses the reaction holo-[peptidyl-carrier protein] + L-cysteine + ATP = L-cysteinyl-[peptidyl-carrier protein] + AMP + diphosphate. The protein operates within siderophore biosynthesis. It functions in the pathway antifungal biosynthesis. In terms of biological role, involved in the biosynthesis of the siderophore pyochelin. Accepts salicylate activated by PchD at the first peptidyl carrier domain (ArCP), and activates and fixes one molecule of cysteine at the second peptidyl carrier domain (PCP1) via a thioester linkage to the phosphopanthetheine moiety. Then catalyzes the condensation reaction between the salicylate bound to the first site and the cysteine bound to the second site, and the cyclization of the cysteine to form the salicyl-thiazolinyl-S-PCP1 intermediate at the second site. When this intermediate is released by the action of a thioesterase, it produces the antifungal antibiotic dihydroaeruginoic acid (Dha or hydroxyphenyl-thiazolinyl-carboxylate). In Pseudomonas aeruginosa (strain ATCC 15692 / DSM 22644 / CIP 104116 / JCM 14847 / LMG 12228 / 1C / PRS 101 / PAO1), this protein is Pyochelin synthetase PchE.